Reading from the N-terminus, the 337-residue chain is MIEADRLVHAQPQGTEERDEQIDRAMRPKLLDEYTGQDDTRAQLKVFIEAAQKRGEALDHMLIYGPPGLGKTTLAMIVANEMGVNIKSTSGPVLEKAGDLAALLTNLEAGDVLFIDEIHRLSPVVEEILYPAMEDYQLDIMIGEGPAARSIKLELPPFTLIGATTRAGALTSPLRARFGIPLRLEFYNVKDLSSIVTRSAKVLELPIDQEGAVEVARRSRGTPRIANRLLRRVRDYAEVKHDGEVNKVVAESALDMLDVDVEGFDYMDRKLLLAIIDKFMGGPVGLDNLAAAIGEERETIEDVLEPFLIQQGFIQRTPRGRIATARAYQHFNLIQPE.

The segment at 1–27 (MIEADRLVHAQPQGTEERDEQIDRAMR) is disordered. The tract at residues 4 to 187 (ADRLVHAQPQ…FGIPLRLEFY (184 aa)) is large ATPase domain (RuvB-L). ATP is bound by residues Arg27, Gly68, Lys71, Thr72, Thr73, 134–136 (EDY), Arg177, Tyr187, and Arg224. Position 72 (Thr72) interacts with Mg(2+). The interval 188–258 (NVKDLSSIVT…VAESALDMLD (71 aa)) is small ATPAse domain (RuvB-S). Residues 261–337 (VEGFDYMDRK…YQHFNLIQPE (77 aa)) form a head domain (RuvB-H) region. Positions 297, 316, and 321 each coordinate DNA.

The protein belongs to the RuvB family. As to quaternary structure, homohexamer. Forms an RuvA(8)-RuvB(12)-Holliday junction (HJ) complex. HJ DNA is sandwiched between 2 RuvA tetramers; dsDNA enters through RuvA and exits via RuvB. An RuvB hexamer assembles on each DNA strand where it exits the tetramer. Each RuvB hexamer is contacted by two RuvA subunits (via domain III) on 2 adjacent RuvB subunits; this complex drives branch migration. In the full resolvosome a probable DNA-RuvA(4)-RuvB(12)-RuvC(2) complex forms which resolves the HJ.

It localises to the cytoplasm. It carries out the reaction ATP + H2O = ADP + phosphate + H(+). The RuvA-RuvB-RuvC complex processes Holliday junction (HJ) DNA during genetic recombination and DNA repair, while the RuvA-RuvB complex plays an important role in the rescue of blocked DNA replication forks via replication fork reversal (RFR). RuvA specifically binds to HJ cruciform DNA, conferring on it an open structure. The RuvB hexamer acts as an ATP-dependent pump, pulling dsDNA into and through the RuvAB complex. RuvB forms 2 homohexamers on either side of HJ DNA bound by 1 or 2 RuvA tetramers; 4 subunits per hexamer contact DNA at a time. Coordinated motions by a converter formed by DNA-disengaged RuvB subunits stimulates ATP hydrolysis and nucleotide exchange. Immobilization of the converter enables RuvB to convert the ATP-contained energy into a lever motion, pulling 2 nucleotides of DNA out of the RuvA tetramer per ATP hydrolyzed, thus driving DNA branch migration. The RuvB motors rotate together with the DNA substrate, which together with the progressing nucleotide cycle form the mechanistic basis for DNA recombination by continuous HJ branch migration. Branch migration allows RuvC to scan DNA until it finds its consensus sequence, where it cleaves and resolves cruciform DNA. This is Holliday junction branch migration complex subunit RuvB from Shewanella loihica (strain ATCC BAA-1088 / PV-4).